Reading from the N-terminus, the 178-residue chain is Probable inosine/xanthosine triphosphatase (178 aa).

Belongs to the YjjX NTPase family. As to quaternary structure, homodimer. Mg(2+) is required as a cofactor. The cofactor is Mn(2+).

The enzyme catalyses XTP + H2O = XDP + phosphate + H(+). It catalyses the reaction ITP + H2O = IDP + phosphate + H(+). Functionally, phosphatase that hydrolyzes non-canonical purine nucleotides such as XTP and ITP to their respective diphosphate derivatives. Probably excludes non-canonical purines from DNA/RNA precursor pool, thus preventing their incorporation into DNA/RNA and avoiding chromosomal lesions. The chain is Probable inosine/xanthosine triphosphatase from Pyrobaculum calidifontis (strain DSM 21063 / JCM 11548 / VA1).